A 190-amino-acid chain; its full sequence is NADH-quinone oxidoreductase subunit B (190 aa).

Cys39, Cys40, Cys104, and Cys135 together coordinate [4Fe-4S] cluster.

The protein belongs to the complex I 20 kDa subunit family. NDH-1 is composed of 14 different subunits. Subunits NuoB, C, D, E, F, and G constitute the peripheral sector of the complex. [4Fe-4S] cluster serves as cofactor.

It localises to the cell inner membrane. It carries out the reaction a quinone + NADH + 5 H(+)(in) = a quinol + NAD(+) + 4 H(+)(out). In terms of biological role, NDH-1 shuttles electrons from NADH, via FMN and iron-sulfur (Fe-S) centers, to quinones in the respiratory chain. The immediate electron acceptor for the enzyme in this species is believed to be a menaquinone. Couples the redox reaction to proton translocation (for every two electrons transferred, four hydrogen ions are translocated across the cytoplasmic membrane), and thus conserves the redox energy in a proton gradient. This is NADH-quinone oxidoreductase subunit B from Chlorobium chlorochromatii (strain CaD3).